Consider the following 59-residue polypeptide: Large ribosomal subunit protein eL29 (59 aa).

Residues 1–26 (MAKSKNHTAHNQTRKAHRNGIKKPKT) are compositionally biased toward basic residues. Positions 1–37 (MAKSKNHTAHNQTRKAHRNGIKKPKTYKYPSLKGVDP) are disordered. A Glycyl lysine isopeptide (Lys-Gly) (interchain with G-Cter in ubiquitin) cross-link involves residue Lys52.

Belongs to the eukaryotic ribosomal protein eL29 family. In terms of assembly, component of the large ribosomal subunit (LSU). Mature yeast ribosomes consist of a small (40S) and a large (60S) subunit. The 40S small subunit contains 1 molecule of ribosomal RNA (18S rRNA) and 33 different proteins (encoded by 57 genes). The large 60S subunit contains 3 rRNA molecules (25S, 5.8S and 5S rRNA) and 46 different proteins (encoded by 81 genes).

Its subcellular location is the cytoplasm. Its function is as follows. Component of the ribosome, a large ribonucleoprotein complex responsible for the synthesis of proteins in the cell. The small ribosomal subunit (SSU) binds messenger RNAs (mRNAs) and translates the encoded message by selecting cognate aminoacyl-transfer RNA (tRNA) molecules. The large subunit (LSU) contains the ribosomal catalytic site termed the peptidyl transferase center (PTC), which catalyzes the formation of peptide bonds, thereby polymerizing the amino acids delivered by tRNAs into a polypeptide chain. The nascent polypeptides leave the ribosome through a tunnel in the LSU and interact with protein factors that function in enzymatic processing, targeting, and the membrane insertion of nascent chains at the exit of the ribosomal tunnel. The protein is Large ribosomal subunit protein eL29 of Saccharomyces cerevisiae (strain ATCC 204508 / S288c) (Baker's yeast).